Reading from the N-terminus, the 317-residue chain is Large ribosomal subunit protein uL10 (317 aa).

The tract at residues 286–317 (AGAGAAAEKKEEAKKEESESEEDDDMGFGLFD) is disordered. Basic and acidic residues predominate over residues 292 to 302 (AEKKEEAKKEE).

Belongs to the universal ribosomal protein uL10 family. In terms of assembly, P0 forms a pentameric complex by interaction with dimers of P1 and P2. Phosphorylated.

Its function is as follows. Ribosomal protein P0 is the functional equivalent of E.coli protein L10. This chain is Large ribosomal subunit protein uL10 (RpLP0), found in Ceratitis capitata (Mediterranean fruit fly).